Consider the following 240-residue polypeptide: Large ribosomal subunit protein uL2 (240 aa).

Positions Met1 to Gly11 are enriched in polar residues. Disordered stretches follow at residues Met1 to Arg31 and Gly206 to Lys240. 2 stretches are compositionally biased toward basic residues: residues Gly13–Val28 and Ser224–Lys240.

It belongs to the universal ribosomal protein uL2 family. Part of the 50S ribosomal subunit. Forms a bridge to the 30S subunit in the 70S ribosome.

Its function is as follows. One of the primary rRNA binding proteins. Required for association of the 30S and 50S subunits to form the 70S ribosome, for tRNA binding and peptide bond formation. It has been suggested to have peptidyltransferase activity; this is somewhat controversial. Makes several contacts with the 16S rRNA in the 70S ribosome. The sequence is that of Large ribosomal subunit protein uL2 from Methanococcus maripaludis (strain C6 / ATCC BAA-1332).